The sequence spans 173 residues: Shikimate kinase 1 (173 aa).

Residue glycine 14–threonine 19 coordinates ATP. Position 18 (serine 18) interacts with Mg(2+). Residues aspartate 36, arginine 60, and glycine 82 each coordinate substrate. Residue arginine 120 participates in ATP binding. Arginine 140 contributes to the substrate binding site. Glutamine 157 contacts ATP.

It belongs to the shikimate kinase family. As to quaternary structure, monomer. It depends on Mg(2+) as a cofactor.

It localises to the cytoplasm. The catalysed reaction is shikimate + ATP = 3-phosphoshikimate + ADP + H(+). It participates in metabolic intermediate biosynthesis; chorismate biosynthesis; chorismate from D-erythrose 4-phosphate and phosphoenolpyruvate: step 5/7. Catalyzes the specific phosphorylation of the 3-hydroxyl group of shikimic acid using ATP as a cosubstrate. The protein is Shikimate kinase 1 of Shigella boydii serotype 18 (strain CDC 3083-94 / BS512).